The following is a 236-amino-acid chain: Phosphoribosylaminoimidazole-succinocarboxamide synthase (236 aa).

The protein belongs to the SAICAR synthetase family.

It carries out the reaction 5-amino-1-(5-phospho-D-ribosyl)imidazole-4-carboxylate + L-aspartate + ATP = (2S)-2-[5-amino-1-(5-phospho-beta-D-ribosyl)imidazole-4-carboxamido]succinate + ADP + phosphate + 2 H(+). Its pathway is purine metabolism; IMP biosynthesis via de novo pathway; 5-amino-1-(5-phospho-D-ribosyl)imidazole-4-carboxamide from 5-amino-1-(5-phospho-D-ribosyl)imidazole-4-carboxylate: step 1/2. This is Phosphoribosylaminoimidazole-succinocarboxamide synthase from Pseudomonas aeruginosa (strain LESB58).